A 167-amino-acid polypeptide reads, in one-letter code: Piercer of microtubule wall 1 protein (167 aa).

A disordered region spans residues 1–54 (MSEEKPQQSAEEPEPGEPKAKPAPEEPEPGEPKAKPAPEEPEPGEPKAKPAPEK). Positions 16-54 (GEPKAKPAPEEPEPGEPKAKPAPEEPEPGEPKAKPAPEK) are enriched in basic and acidic residues.

This sequence belongs to the PIERCE1 family. Microtubule inner protein component of sperm flagellar doublet microtubules. Interacts with CFAP53, ODAD1 and ODAD3; the interactions link the outer dynein arms docking complex (ODA-DC) to the internal microtubule inner proteins (MIP) in cilium axoneme. In terms of tissue distribution, expressed in brain, lung, kidney and testis.

The protein localises to the cytoplasm. It is found in the cytoskeleton. The protein resides in the cilium axoneme. It localises to the flagellum axoneme. In terms of biological role, microtubule inner protein involved in the attachment of outer dynein arms (ODAs) to dynein-decorated doublet microtubules (DMTs) in cilia axoneme. Functions at the initial step of left-right asymmetry specification of the visceral organs. In Mus musculus (Mouse), this protein is Piercer of microtubule wall 1 protein.